We begin with the raw amino-acid sequence, 100 residues long: Large ribosomal subunit protein uL23 (100 aa).

The protein belongs to the universal ribosomal protein uL23 family. In terms of assembly, part of the 50S ribosomal subunit. Contacts protein L29, and trigger factor when it is bound to the ribosome.

Its function is as follows. One of the early assembly proteins it binds 23S rRNA. One of the proteins that surrounds the polypeptide exit tunnel on the outside of the ribosome. Forms the main docking site for trigger factor binding to the ribosome. This chain is Large ribosomal subunit protein uL23, found in Prochlorococcus marinus (strain MIT 9515).